The chain runs to 304 residues: Quinolinate synthase (304 aa).

Iminosuccinate-binding residues include H23 and S40. Residue C85 participates in [4Fe-4S] cluster binding. Iminosuccinate-binding positions include 111–113 and S128; that span reads YVN. C171 contacts [4Fe-4S] cluster. Residues 197 to 199 and T214 contribute to the iminosuccinate site; that span reads HPE. C259 is a binding site for [4Fe-4S] cluster.

This sequence belongs to the quinolinate synthase family. Type 2 subfamily. It depends on [4Fe-4S] cluster as a cofactor.

It localises to the cytoplasm. The catalysed reaction is iminosuccinate + dihydroxyacetone phosphate = quinolinate + phosphate + 2 H2O + H(+). It functions in the pathway cofactor biosynthesis; NAD(+) biosynthesis; quinolinate from iminoaspartate: step 1/1. Functionally, catalyzes the condensation of iminoaspartate with dihydroxyacetone phosphate to form quinolinate. The chain is Quinolinate synthase from Pelobacter propionicus (strain DSM 2379 / NBRC 103807 / OttBd1).